Reading from the N-terminus, the 1026-residue chain is Multidrug resistance protein MdtC (1026 aa).

The next 11 helical transmembrane spans lie at 15–35, 333–353, 360–380, 387–407, 431–451, 463–483, 528–548, 853–873, 897–917, 953–973, and 984–1004; these read ILIAAAITLCGILGFRLLPVA, EVEETLAISVALVILVVFLFL, LIPAVAVPVSLIGTFAAMYLC, LSLMALTIATGFVVDDAIVVL, VGFTVISMSLSLVAVFLPLLL, FAVTLSVAIGISLVVSLTLTP, LVGVVFLGTVALNIWLYIAIP, LILIVAAIATVYIVLGILYES, LFNAPFSLIALIGIMLLIGIV, PIMMTTLAALFGALPLVLSGG, and ITIVGGLVMSQLLTLYTTPVV.

This sequence belongs to the resistance-nodulation-cell division (RND) (TC 2.A.6) family. MdtC subfamily. In terms of assembly, part of a tripartite efflux system composed of MdtA, MdtB and MdtC. MdtC forms a heteromultimer with MdtB.

It localises to the cell inner membrane. In Salmonella gallinarum (strain 287/91 / NCTC 13346), this protein is Multidrug resistance protein MdtC.